The sequence spans 158 residues: Large ribosomal subunit protein uL16 (158 aa).

This sequence belongs to the universal ribosomal protein uL16 family. Part of the 50S ribosomal subunit.

Functionally, binds 23S rRNA and is also seen to make contacts with the A and possibly P site tRNAs. This Prochlorococcus marinus (strain MIT 9303) protein is Large ribosomal subunit protein uL16.